The sequence spans 237 residues: Flagellar L-ring protein (237 aa).

An N-terminal signal peptide occupies residues 1-16 (MIKRSAVVLMAVILTG). Residue Cys-17 is the site of N-palmitoyl cysteine attachment. A lipid anchor (S-diacylglycerol cysteine) is attached at Cys-17. The disordered stretch occupies residues 122-143 (PPDSSGDMSTDSNSSSDGKGSV). Over residues 124-140 (DSSGDMSTDSNSSSDGK) the composition is skewed to low complexity.

The protein belongs to the FlgH family. As to quaternary structure, the basal body constitutes a major portion of the flagellar organelle and consists of four rings (L,P,S, and M) mounted on a central rod.

It is found in the cell outer membrane. The protein resides in the bacterial flagellum basal body. Assembles around the rod to form the L-ring and probably protects the motor/basal body from shearing forces during rotation. The sequence is that of Flagellar L-ring protein from Allorhizobium ampelinum (strain ATCC BAA-846 / DSM 112012 / S4) (Agrobacterium vitis (strain S4)).